Reading from the N-terminus, the 271-residue chain is Co-chaperone protein DjlA (271 aa).

Residues 1–6 (MQYWGK) are Periplasmic-facing. The helical transmembrane segment at 7–31 (IIGVAVALLMGGGFWGVVLGLLIGH) threads the bilayer. Topologically, residues 32-271 (MFDKARSRKM…ELIKQQKGFK (240 aa)) are cytoplasmic. In terms of domain architecture, J spans 205 to 271 (DACNVLGVKP…ELIKQQKGFK (67 aa)).

As to quaternary structure, homodimer.

Its subcellular location is the cell inner membrane. Its function is as follows. Regulatory DnaK co-chaperone. Direct interaction between DnaK and DjlA is needed for the induction of the wcaABCDE operon, involved in the synthesis of a colanic acid polysaccharide capsule, possibly through activation of the RcsB/RcsC phosphotransfer signaling pathway. The colanic acid capsule may help the bacterium survive conditions outside the host. This Escherichia coli (strain K12) protein is Co-chaperone protein DjlA.